Reading from the N-terminus, the 132-residue chain is Small ribosomal subunit protein uS8 (132 aa).

This sequence belongs to the universal ribosomal protein uS8 family. Part of the 30S ribosomal subunit. Contacts proteins S5 and S12.

In terms of biological role, one of the primary rRNA binding proteins, it binds directly to 16S rRNA central domain where it helps coordinate assembly of the platform of the 30S subunit. This is Small ribosomal subunit protein uS8 from Granulibacter bethesdensis (strain ATCC BAA-1260 / CGDNIH1).